Reading from the N-terminus, the 499-residue chain is Cytochrome P450 710A2 (499 aa).

Residues 5 to 25 (VSIFASLAPYLVSALLLFFLI) form a helical membrane-spanning segment. Cys-439 contacts heme.

Belongs to the cytochrome P450 family. Heme serves as cofactor. In terms of tissue distribution, expressed in the vascular tissues of roots, shoots, stems and leaves. Expressed in root tips, carpes, siliques and seeds.

Its subcellular location is the membrane. The enzyme catalyses 5-dehydroepisterol + NADPH + O2 + H(+) = ergosta-5,7,22,24(28)-tetraen-3beta-ol + NADP(+) + 2 H2O. Its pathway is steroid biosynthesis; sterol biosynthesis. In terms of biological role, required to form the C-22 double bond in the sterol side chain. Possesses in vitro C-22 desaturase activity toward 24-epi-campesterol and beta-sitosterol and produces brassicasterol and stigmasterol, respectively. No activity with campesterol. The protein is Cytochrome P450 710A2 of Arabidopsis thaliana (Mouse-ear cress).